Consider the following 309-residue polypeptide: Glycine--tRNA ligase alpha subunit (309 aa).

Belongs to the class-II aminoacyl-tRNA synthetase family. As to quaternary structure, tetramer of two alpha and two beta subunits.

Its subcellular location is the cytoplasm. It catalyses the reaction tRNA(Gly) + glycine + ATP = glycyl-tRNA(Gly) + AMP + diphosphate. The protein is Glycine--tRNA ligase alpha subunit of Anaeromyxobacter sp. (strain K).